Here is an 866-residue protein sequence, read N- to C-terminus: Protein aubergine (866 aa).

Met-1 carries the N-acetylmethionine modification. The segment at 1–61 (MNLPPNPVIA…GGGDAQVGPS (61 aa)) is disordered. 4 positions are modified to symmetric dimethylarginine: Arg-11, Arg-13, Arg-15, and Arg-17. Residues 46-56 (ASGGNGGGGDA) show a composition bias toward gly residues. In terms of domain architecture, PAZ spans 281-390 (TLYNILSDAI…IIPELARATG (110 aa)). The Piwi domain maps to 555 to 852 (IVMVVMRSPN…LAFLVAESIN (298 aa)).

The protein belongs to the argonaute family. Piwi subfamily. Component of the ping-pong piRNA processing (4P) complex consisting of krimp, aub and AGO3. Interacts (via N-terminus when symmetrically dimethylated on arginine residues) with krimp (via tudor domain); this interaction requires methylation of at least one N-terminal arginie residue. Interacts with vas and AGO3. May form part of a piRNA processing complex consisting of tud, aub and AGO3. Interacts (when symmetrically dimethylated on arginine residues) with tud; methylation and/or interaction requires association with piRNA. Interacts (via N-terminus and when associated with piRNA) with csul/PRMT5; the interaction recruits the PRMT5 methylosome complex to modify N-terminal arginines by symmetrical dimethylation but involves residues other than the arginines to be modified. Forms a complex with smg, twin, AGO3, nanos mRNA and piRNAs that targets the nanos 3'-untranslated region, in early embryos. Interacts with nanos mRNA and rump (in an RNA-dependent manner). Interacts with papi and vret. Interacts with me31B. Post-translationally, symmetrical dimethylation of arginines (sDMA) on Arg-11, Arg-13 and/or Arg-15 by csul/PRMT5/DART5, is required for binding to tud, localization to the pole plasm and association with the correct piRNAs. SDMA on Arg-11, Arg-13, Arg-15 and/or Arg-17 is required for binding to krimp and stable recruitment to subregions of the nuage. Methylation state does not affect protein stability. SDMA plays an important role in ping-pong amplification of piRNAs and is essential for function in vivo. Methylation state functions as an indicator of its piRNA binding state. PiRNA binding promotes sDMA modification; piRNA binding induces a conformational change that exposes the N-terminal arginines, making them available to the methylosome complex. Expressed in ovary. In the germarium, found in germline stem and cyst cells. In egg chambers from stage 6, expressed both in nurse cells and oocytes. In embryos, accumulates in the pole cells, although low expression is detected throughout the entire embryo. In testis, expressed in germline stem cells, gonialblast and spermatogonia cells (at protein level). In the adult brain, expressed in the ellipsoid body, the mushroom body subdivision in the peduncle and the cell body layer. Expressed specifically in alpha'/beta' and gamma neurons.

Its subcellular location is the cytoplasm. It is found in the cytosol. It localises to the perinuclear region. The protein resides in the cytoplasmic ribonucleoprotein granule. In terms of biological role, component of the perinuclear meiotic nuage, a germline-specific subcellular membraneless ribonucleoprotein compartment involved in production of transposable element-repressing Piwi-interacting RNA (piRNA)-induced silencing complexes (piRISCs), which are essential for maintaining germline integrity during oogenesis; essential for the formation and/or structural integrity of nuage particles. Acts via the Piwi-interacting RNA (piRNA) metabolic process, which mediates the repression of transposable elements during meiosis by forming complexes composed of piRNAs and Piwi proteins and governs the methylation and subsequent repression of transposons. Directly binds piRNAs, a class of 24 to 30 nucleotide RNAs that are generated by a Dicer-independent mechanism and are primarily derived from transposons and other repeated sequence elements. Shows RNA cleavage or slicer activity; including aub-piRNA complexes from ovary and testis. When loaded with guide piRNAs recognizes and cleaves complementary RNAs to repress their expression and produce complementary piRNAs. Together with Piwi protein AGO3 recruited to subregions of the perinuclear nuage by krimp, which coordinates their activity in the ping-pong amplification step of secondary piRNA biogenesis. Krimp recruits piRNA bound aub and unbound AGO3, bringing them into close proximity to facilitate the loading onto AGO3 of freshly cut piRNAs generated by aub cleavage of target sequences; krimp recognizes the piRNA loading state of the Piwi proteins via symmetrically dimethylated arginine modification in their N-terminus. Important for asymmetric ping-pong amplification to bias production towards antisense piRNAs capable of silencing transposable elements. Required for the localization of mael and krimp to the meiotic nuage. In ovary, associates predominantly with antisense piRNAs that contain uridine at their 5' end. In testis, associates with Su(Ste) antisense piRNAs (most abundant class of piRNAs found in complex with aub in testes) and negatively regulates Ste expression, most likely by cleaving its transcripts. Also in testis, may repress translation of vas when associated with a piRNA derived from chromosome X, termed AT-chX-1, whose sequence shows strong complementarity to vas mRNA. Involved in repression of long interspersed nuclear elements (LINEs) including HeT-A, I-element and TART LINEs. Repression of specialized telomeric retroelements HeT-A and TART is involved in telomere regulation; Drosophila telomeres being maintained by transposition of specialized telomeric retroelements. Also involved in telomeric trans-silencing, a repression mechanism by which a transposon or a transgene inserted in subtelomeric heterochromatin has the capacity to repress in trans, in the female germline, a homologous transposon, or transgene located in euchromatin. Involved in the suppression of meiotic drive of sex chromosomes and autosomes. Involved in transposon silencing in the adult brain. Required for dorsal-ventral as well as anterior-posterior patterning of the egg. Required during oogenesis for primordial germ cell formation and activation of RNA interference. During early oogenesis, required for osk mRNA silencing and polarization of the microtubule cytoskeleton. During mid-oogenesis, required for osk mRNA localization to the posterior pole and efficient translation of osk and grk. During embryogenesis, required for posterior localization of nanos (nos) mRNA, independently of osk, and pole cell formation. Forms a complex with smg, twin, AGO3 and specific piRNAs that targets nanos mRNA (and probably other maternal mRNAS) for deadenylation promoting its decay during early embryogenesis. The protein is Protein aubergine of Drosophila melanogaster (Fruit fly).